The following is a 206-amino-acid chain: Ribosomal RNA large subunit methyltransferase E (206 aa).

Residues G63, W65, D83, D99, and D124 each coordinate S-adenosyl-L-methionine. K164 acts as the Proton acceptor in catalysis.

This sequence belongs to the class I-like SAM-binding methyltransferase superfamily. RNA methyltransferase RlmE family.

It is found in the cytoplasm. The enzyme catalyses uridine(2552) in 23S rRNA + S-adenosyl-L-methionine = 2'-O-methyluridine(2552) in 23S rRNA + S-adenosyl-L-homocysteine + H(+). Its function is as follows. Specifically methylates the uridine in position 2552 of 23S rRNA at the 2'-O position of the ribose in the fully assembled 50S ribosomal subunit. The protein is Ribosomal RNA large subunit methyltransferase E of Buchnera aphidicola subsp. Schizaphis graminum (strain Sg).